A 30-amino-acid chain; its full sequence is MKTISRQAYADMFGPTTGDRLRLADTELFL.

The protein belongs to the metallo-dependent hydrolases superfamily. Urease alpha subunit family. In terms of assembly, heterotrimer of UreA (gamma), UreB (beta) and UreC (alpha) subunits. Three heterotrimers associate to form the active enzyme. It depends on Ni cation as a cofactor.

Its subcellular location is the cytoplasm. The enzyme catalyses urea + 2 H2O + H(+) = hydrogencarbonate + 2 NH4(+). The protein operates within nitrogen metabolism; urea degradation; CO(2) and NH(3) from urea (urease route): step 1/1. This Escherichia coli protein is Urease subunit alpha (ureC).